A 603-amino-acid chain; its full sequence is Conglutin beta 2 (603 aa).

A signal peptide spans 1–30 (MANMRVKFPTLVLLLGIVFLMAVSIGIAYG). Basic and acidic residues predominate over residues 36–105 (KNHERPQERE…REPSRGREQE (70 aa)). 3 disordered regions span residues 36 to 177 (KNHE…RNPY), 343 to 363 (DGQEDEEQSRGQEQSHQDQGV), and 375 to 399 (LRKHAQSSSGKGKPSESGPFNLRSD). A compositionally biased stretch (low complexity) spans 137–147 (QGSSSSSGRQS). The span at 148-172 (GYERREQREEREQQQEQDSRSESRR) shows a compositional bias: basic and acidic residues. Residues 177–335 (YYFSYERFQT…TFNTRYEEIQ (159 aa)) enclose the Cupin type-1 1 domain. The span at 381–393 (SSSGKGKPSESGP) shows a compositional bias: low complexity. The 161-residue stretch at 394–554 (FNLRSDEPIY…TFPGSVEDVE (161 aa)) folds into the Cupin type-1 2 domain. Asparagine 504 carries an N-linked (GlcNAc...) asparagine glycan. Residues 564–574 (YFANAQPQQQQ) show a composition bias toward low complexity. A disordered region spans residues 564–583 (YFANAQPQQQQQREKEGRRG).

The protein belongs to the 7S seed storage protein family. As to quaternary structure, component of globulins complexes which accumulate in seeds.

Seed storage protein. Accumulates during seed development and is hydrolyzed after germination to provide a carbon and nitrogen source for the developing seedling. This Lupinus angustifolius (Narrow-leaved blue lupine) protein is Conglutin beta 2.